Reading from the N-terminus, the 103-residue chain is MQPNDITFFQRFQDDILAGRKTITIRDESESHFKTGDVLRVGRFEDDGYFCTIEVTATSTITLETLTEKHAEQENMTLTELIKVIADIYPGQTQFYVIEFKCL.

The ASCH domain occupies 6–101 (ITFFQRFQDD…QTQFYVIEFK (96 aa)). K21 acts as the Proton acceptor in catalysis. T24 (nucleophile) is an active-site residue. The Proton donor role is filled by E74.

Belongs to the N(4)-acetylcytidine amidohydrolase family.

The enzyme catalyses N(4)-acetylcytidine + H2O = cytidine + acetate + H(+). It catalyses the reaction N(4)-acetyl-2'-deoxycytidine + H2O = 2'-deoxycytidine + acetate + H(+). It carries out the reaction N(4)-acetylcytosine + H2O = cytosine + acetate + H(+). Functionally, catalyzes the hydrolysis of N(4)-acetylcytidine (ac4C). In Escherichia coli (strain SE11), this protein is N(4)-acetylcytidine amidohydrolase (yqfB).